The chain runs to 1001 residues: uncharacterized protein (1001 aa).

A compositionally biased stretch (basic and acidic residues) spans 939–948 (KVVDNKRDAS). The interval 939 to 1001 (KVVDNKRDAS…HTSKRVQKKN (63 aa)) is disordered. 2 positions are modified to phosphoserine: serine 948 and serine 950.

This is an uncharacterized protein from Schizosaccharomyces pombe (strain 972 / ATCC 24843) (Fission yeast).